Consider the following 237-residue polypeptide: Phosphoribosylaminoimidazole-succinocarboxamide synthase (237 aa).

It belongs to the SAICAR synthetase family.

The catalysed reaction is 5-amino-1-(5-phospho-D-ribosyl)imidazole-4-carboxylate + L-aspartate + ATP = (2S)-2-[5-amino-1-(5-phospho-beta-D-ribosyl)imidazole-4-carboxamido]succinate + ADP + phosphate + 2 H(+). It functions in the pathway purine metabolism; IMP biosynthesis via de novo pathway; 5-amino-1-(5-phospho-D-ribosyl)imidazole-4-carboxamide from 5-amino-1-(5-phospho-D-ribosyl)imidazole-4-carboxylate: step 1/2. The sequence is that of Phosphoribosylaminoimidazole-succinocarboxamide synthase from Marinobacter nauticus (strain ATCC 700491 / DSM 11845 / VT8) (Marinobacter aquaeolei).